The sequence spans 200 residues: Rho-related protein racD (200 aa).

Residues Ala-20, Gly-22, Lys-23, Thr-24, Cys-25, Tyr-39, and Thr-42 each contribute to the GTP site. Thr-24 provides a ligand contact to Mg(2+). 2 short sequence motifs (switch) span residues 33–44 (NEFPKDYVPTVF) and 64–82 (DTAG…YPNT). A Mg(2+)-binding site is contributed by Thr-42. The GTP site is built by Lys-123, Asp-125, and Ala-166. Cys-197 is subject to Cysteine methyl ester. A lipid anchor (S-geranylgeranyl cysteine) is attached at Cys-197. A propeptide spans 198–200 (ALL) (removed in mature form).

The protein belongs to the small GTPase superfamily. Rho family. Mg(2+) is required as a cofactor.

The protein localises to the cell membrane. It localises to the cytoplasm. The protein resides in the cytoskeleton. The enzyme catalyses GTP + H2O = GDP + phosphate + H(+). Its activity is regulated as follows. Regulated by guanine nucleotide exchange factors (GEFs) which promote the exchange of bound GDP for free GTP, GTPase activating proteins (GAPs) which increase the GTP hydrolysis activity, and GDP dissociation inhibitors which inhibit the dissociation of the nucleotide from the GTPase. Small GTPase which cycles between active GTP-bound and inactive GDP-bound states. In Entamoeba histolytica (strain ATCC 30459 / HM-1:IMSS / ABRM), this protein is Rho-related protein racD.